Consider the following 596-residue polypeptide: Putative terpene synthase 3, chloroplastic (596 aa).

A chloroplast-targeting transit peptide spans 1 to 46 (MATLSMQVSTLSKQVKNLNTFGMGSASKLPMVARRVSTIRLRPICS). Positions 349 and 353 each coordinate Mn(2+). The DDXXD motif signature appears at 349 to 353 (DDVYD). 2 homodimerization regions span residues 355–361 (YGTLDEL) and 427–464 (EAKWYYAGYTPTLAEYLENAKVSISSPTIISQVYFTLP). Positions 493 and 501 each coordinate Mn(2+).

It belongs to the terpene synthase family. In terms of assembly, homodimer. Mn(2+) serves as cofactor. Mg(2+) is required as a cofactor.

The protein resides in the plastid. Its subcellular location is the chloroplast. It functions in the pathway secondary metabolite biosynthesis; terpenoid biosynthesis. Putative monoterpene synthase. This Thymus vulgaris (Thyme) protein is Putative terpene synthase 3, chloroplastic.